A 340-amino-acid chain; its full sequence is tRNA N6-adenosine threonylcarbamoyltransferase (340 aa).

Residues His-114 and His-118 each coordinate Fe cation. Substrate contacts are provided by residues 140-144, Asp-173, Gly-186, Asp-190, and Asn-281; that span reads TISGG. Asp-309 provides a ligand contact to Fe cation.

Belongs to the KAE1 / TsaD family. It depends on Fe(2+) as a cofactor.

It is found in the cytoplasm. It catalyses the reaction L-threonylcarbamoyladenylate + adenosine(37) in tRNA = N(6)-L-threonylcarbamoyladenosine(37) in tRNA + AMP + H(+). Its function is as follows. Required for the formation of a threonylcarbamoyl group on adenosine at position 37 (t(6)A37) in tRNAs that read codons beginning with adenine. Is involved in the transfer of the threonylcarbamoyl moiety of threonylcarbamoyl-AMP (TC-AMP) to the N6 group of A37, together with TsaE and TsaB. TsaD likely plays a direct catalytic role in this reaction. The protein is tRNA N6-adenosine threonylcarbamoyltransferase of Christiangramia forsetii (strain DSM 17595 / CGMCC 1.15422 / KT0803) (Gramella forsetii).